Consider the following 328-residue polypeptide: GMP reductase (328 aa).

Cys176 serves as the catalytic Thioimidate intermediate. 205 to 228 contributes to the NADP(+) binding site; that stretch reads IIADGGIRTHGDVAKSIRFGATMV.

Belongs to the IMPDH/GMPR family. GuaC type 2 subfamily.

The catalysed reaction is IMP + NH4(+) + NADP(+) = GMP + NADPH + 2 H(+). Its function is as follows. Catalyzes the irreversible NADPH-dependent deamination of GMP to IMP. It functions in the conversion of nucleobase, nucleoside and nucleotide derivatives of G to A nucleotides, and in maintaining the intracellular balance of A and G nucleotides. The sequence is that of GMP reductase from Bacillus thuringiensis (strain Al Hakam).